Reading from the N-terminus, the 59-residue chain is Large ribosomal subunit protein bL32 (59 aa).

This sequence belongs to the bacterial ribosomal protein bL32 family. Part of the 50S ribosomal subunit.

This chain is Large ribosomal subunit protein bL32 (rpmF), found in Bacillus subtilis (strain 168).